The sequence spans 20 residues: T cell receptor alpha joining 42 (20 aa).

The tract at residues 1-20 (YGGSQGNLIFGKGTKLSVKP) is disordered.

In terms of assembly, alpha-beta TR is a heterodimer composed of an alpha and beta chain; disulfide-linked. The alpha-beta TR is associated with the transmembrane signaling CD3 coreceptor proteins to form the TR-CD3 (TcR or TCR). The assembly of alpha-beta TR heterodimers with CD3 occurs in the endoplasmic reticulum where a single alpha-beta TR heterodimer associates with one CD3D-CD3E heterodimer, one CD3G-CD3E heterodimer and one CD247 homodimer forming a stable octameric structure. CD3D-CD3E and CD3G-CD3E heterodimers preferentially associate with TR alpha and TR beta chains, respectively. The association of the CD247 homodimer is the last step of TcR assembly in the endoplasmic reticulum and is required for transport to the cell surface.

Its subcellular location is the cell membrane. Its function is as follows. J region of the variable domain of T cell receptor (TR) alpha chain that participates in the antigen recognition. Alpha-beta T cell receptors are antigen specific receptors which are essential to the immune response and are present on the cell surface of T lymphocytes. Recognize peptide-major histocompatibility (MH) (pMH) complexes that are displayed by antigen presenting cells (APC), a prerequisite for efficient T cell adaptive immunity against pathogens. Binding of alpha-beta TR to pMH complex initiates TR-CD3 clustering on the cell surface and intracellular activation of LCK that phosphorylates the ITAM motifs of CD3G, CD3D, CD3E and CD247 enabling the recruitment of ZAP70. In turn, ZAP70 phosphorylates LAT, which recruits numerous signaling molecules to form the LAT signalosome. The LAT signalosome propagates signal branching to three major signaling pathways, the calcium, the mitogen-activated protein kinase (MAPK) kinase and the nuclear factor NF-kappa-B (NF-kB) pathways, leading to the mobilization of transcription factors that are critical for gene expression and essential for T cell growth and differentiation. The T cell repertoire is generated in the thymus, by V-(D)-J rearrangement. This repertoire is then shaped by intrathymic selection events to generate a peripheral T cell pool of self-MH restricted, non-autoaggressive T cells. Post-thymic interaction of alpha-beta TR with the pMH complexes shapes TR structural and functional avidity. This chain is T cell receptor alpha joining 42, found in Homo sapiens (Human).